A 1374-amino-acid polypeptide reads, in one-letter code: L-2-aminoadipate reductase large subunit (1374 aa).

A Carrier domain is found at 828-905; the sequence is SEFNQQEREI…AFAAEVSRLK (78 aa). At Ser-865 the chain carries O-(pantetheine 4'-phosphoryl)serine.

The protein belongs to the ATP-dependent AMP-binding enzyme family. Heterodimer of an alpha and a beta subunit. Requires pantetheine 4'-phosphate as cofactor.

It carries out the reaction (S)-2-amino-6-oxohexanoate + NADP(+) + H2O = L-2-aminoadipate + NADPH + 2 H(+). It catalyses the reaction (S)-2-amino-6-oxohexanoate + NAD(+) + H2O = L-2-aminoadipate + NADH + 2 H(+). The catalysed reaction is (S)-2-amino-6-oxohexanoate + AMP + diphosphate + NADP(+) = L-2-aminoadipate + ATP + NADPH + H(+). Its pathway is amino-acid biosynthesis; L-lysine biosynthesis via AAA pathway; L-lysine from L-alpha-aminoadipate (fungal route): step 1/3. Its function is as follows. Catalyzes the activation of alpha-aminoadipate by ATP-dependent adenylation and the reduction of activated alpha-aminoadipate by NADPH. The activated alpha-aminoadipate is bound to the phosphopantheinyl group of the enzyme itself before it is reduced to (S)-2-amino-6-oxohexanoate. This is L-2-aminoadipate reductase large subunit (LYS2) from Candida glabrata (strain ATCC 2001 / BCRC 20586 / JCM 3761 / NBRC 0622 / NRRL Y-65 / CBS 138) (Yeast).